Here is a 147-residue protein sequence, read N- to C-terminus: uncharacterized protein (147 aa).

The next 2 helical transmembrane spans lie at 42-62 and 64-84; these read WASL…SPEP and LILQ…ATAF.

The protein localises to the cell membrane. This is an uncharacterized protein from Bacillus subtilis (strain 168).